The following is a 180-amino-acid chain: UPF0227 protein Shew_1627 (180 aa).

Belongs to the UPF0227 family.

In Shewanella loihica (strain ATCC BAA-1088 / PV-4), this protein is UPF0227 protein Shew_1627.